Reading from the N-terminus, the 401-residue chain is Acetate kinase (401 aa).

Asparagine 7 contributes to the Mg(2+) binding site. Lysine 14 contributes to the ATP binding site. Residue arginine 91 coordinates substrate. Aspartate 148 (proton donor/acceptor) is an active-site residue. ATP is bound by residues 208-212, 283-285, and 332-336; these read HLGNG, DFR, and GVGEN. Glutamate 385 is a Mg(2+) binding site.

Belongs to the acetokinase family. As to quaternary structure, homodimer. Requires Mg(2+) as cofactor. The cofactor is Mn(2+).

The protein resides in the cytoplasm. It catalyses the reaction acetate + ATP = acetyl phosphate + ADP. Its pathway is metabolic intermediate biosynthesis; acetyl-CoA biosynthesis; acetyl-CoA from acetate: step 1/2. Its function is as follows. Catalyzes the formation of acetyl phosphate from acetate and ATP. Can also catalyze the reverse reaction. The sequence is that of Acetate kinase from Caldanaerobacter subterraneus subsp. tengcongensis (strain DSM 15242 / JCM 11007 / NBRC 100824 / MB4) (Thermoanaerobacter tengcongensis).